The primary structure comprises 223 residues: Adenylate kinase (223 aa).

Residue 10 to 15 participates in ATP binding; sequence GSGKGT. The tract at residues 30–59 is NMP; the sequence is ESGAIFRQHIGGGTELGKKAKEYIDRGDLV. Residues serine 31, arginine 36, 57-59, 84-87, and glutamine 91 contribute to the AMP site; these read DLV and GFPR. An LID region spans residues 125–164; it reads GRRLCKNDNNHPNNIFIDAIKPDGDVCRVCGGSLSARADD. Arginine 126 is a binding site for ATP. AMP is bound by residues arginine 161 and arginine 173. Position 209 (glycine 209) interacts with ATP.

This sequence belongs to the adenylate kinase family. As to quaternary structure, monomer.

The protein resides in the cytoplasm. The catalysed reaction is AMP + ATP = 2 ADP. It functions in the pathway purine metabolism; AMP biosynthesis via salvage pathway; AMP from ADP: step 1/1. Its function is as follows. Catalyzes the reversible transfer of the terminal phosphate group between ATP and AMP. Plays an important role in cellular energy homeostasis and in adenine nucleotide metabolism. This Nitratidesulfovibrio vulgaris (strain DSM 19637 / Miyazaki F) (Desulfovibrio vulgaris) protein is Adenylate kinase.